A 249-amino-acid chain; its full sequence is Purine nucleoside phosphorylase ML0918 (249 aa).

H72, C109, and H126 together coordinate Zn(2+).

Belongs to the purine nucleoside phosphorylase YfiH/LACC1 family. In terms of assembly, homodimer. It depends on Cu(2+) as a cofactor. Zn(2+) is required as a cofactor.

The enzyme catalyses adenosine + phosphate = alpha-D-ribose 1-phosphate + adenine. The catalysed reaction is S-methyl-5'-thioadenosine + phosphate = 5-(methylsulfanyl)-alpha-D-ribose 1-phosphate + adenine. It carries out the reaction inosine + phosphate = alpha-D-ribose 1-phosphate + hypoxanthine. It catalyses the reaction adenosine + H2O + H(+) = inosine + NH4(+). Its function is as follows. Purine nucleoside enzyme that catalyzes the phosphorolysis of adenosine and inosine nucleosides, yielding D-ribose 1-phosphate and the respective free bases, adenine and hypoxanthine. Also catalyzes the phosphorolysis of S-methyl-5'-thioadenosine into adenine and S-methyl-5-thio-alpha-D-ribose 1-phosphate. Also has adenosine deaminase activity. The sequence is that of Purine nucleoside phosphorylase ML0918 from Mycobacterium leprae (strain TN).